Here is a 189-residue protein sequence, read N- to C-terminus: Elongation factor P (189 aa).

Belongs to the elongation factor P family.

It localises to the cytoplasm. It functions in the pathway protein biosynthesis; polypeptide chain elongation. In terms of biological role, involved in peptide bond synthesis. Stimulates efficient translation and peptide-bond synthesis on native or reconstituted 70S ribosomes in vitro. Probably functions indirectly by altering the affinity of the ribosome for aminoacyl-tRNA, thus increasing their reactivity as acceptors for peptidyl transferase. This chain is Elongation factor P, found in Rhizobium etli (strain ATCC 51251 / DSM 11541 / JCM 21823 / NBRC 15573 / CFN 42).